Consider the following 243-residue polypeptide: UDP-2,3-diacylglucosamine hydrolase (243 aa).

Mn(2+)-binding residues include D8, H10, D41, N79, and H114. 79 to 80 is a binding site for substrate; the sequence is NR. Positions 122, 164, 167, and 195 each coordinate substrate. Residues H195 and H197 each contribute to the Mn(2+) site.

This sequence belongs to the LpxH family. It depends on Mn(2+) as a cofactor.

The protein resides in the cell inner membrane. It carries out the reaction UDP-2-N,3-O-bis[(3R)-3-hydroxytetradecanoyl]-alpha-D-glucosamine + H2O = 2-N,3-O-bis[(3R)-3-hydroxytetradecanoyl]-alpha-D-glucosaminyl 1-phosphate + UMP + 2 H(+). Its pathway is glycolipid biosynthesis; lipid IV(A) biosynthesis; lipid IV(A) from (3R)-3-hydroxytetradecanoyl-[acyl-carrier-protein] and UDP-N-acetyl-alpha-D-glucosamine: step 4/6. Hydrolyzes the pyrophosphate bond of UDP-2,3-diacylglucosamine to yield 2,3-diacylglucosamine 1-phosphate (lipid X) and UMP by catalyzing the attack of water at the alpha-P atom. Involved in the biosynthesis of lipid A, a phosphorylated glycolipid that anchors the lipopolysaccharide to the outer membrane of the cell. The sequence is that of UDP-2,3-diacylglucosamine hydrolase from Vibrio vulnificus (strain CMCP6).